Reading from the N-terminus, the 240-residue chain is Large ribosomal subunit protein uL1 (240 aa).

The protein belongs to the universal ribosomal protein uL1 family. As to quaternary structure, part of the 50S ribosomal subunit.

Its function is as follows. Binds directly to 23S rRNA. The L1 stalk is quite mobile in the ribosome, and is involved in E site tRNA release. Functionally, protein L1 is also a translational repressor protein, it controls the translation of the L11 operon by binding to its mRNA. This is Large ribosomal subunit protein uL1 from Streptomyces griseus subsp. griseus (strain JCM 4626 / CBS 651.72 / NBRC 13350 / KCC S-0626 / ISP 5235).